Reading from the N-terminus, the 176-residue chain is Negative modulator of initiation of replication (176 aa).

This sequence belongs to the SeqA family. As to quaternary structure, homodimer. Polymerizes to form helical filaments.

The protein resides in the cytoplasm. Its function is as follows. Negative regulator of replication initiation, which contributes to regulation of DNA replication and ensures that replication initiation occurs exactly once per chromosome per cell cycle. Binds to pairs of hemimethylated GATC sequences in the oriC region, thus preventing assembly of replication proteins and re-initiation at newly replicated origins. Repression is relieved when the region becomes fully methylated. The protein is Negative modulator of initiation of replication of Hamiltonella defensa subsp. Acyrthosiphon pisum (strain 5AT).